Consider the following 709-residue polypeptide: Polyribonucleotide nucleotidyltransferase (709 aa).

Residues Asp487 and Asp493 each contribute to the Mg(2+) site. One can recognise a KH domain in the interval 554–613 (PRIHTMKISSDKIKDVIGKGGAVIRALCEETGTTIEIEDDGTIKIAATEGAAAKEAIRRI). Residues 623 to 691 (GKIYPGKVMR…RQGRIRLSIK (69 aa)) form the S1 motif domain.

This sequence belongs to the polyribonucleotide nucleotidyltransferase family. In terms of assembly, component of the RNA degradosome, which is a multiprotein complex involved in RNA processing and mRNA degradation. The cofactor is Mg(2+).

The protein localises to the cytoplasm. It carries out the reaction RNA(n+1) + phosphate = RNA(n) + a ribonucleoside 5'-diphosphate. In terms of biological role, involved in mRNA degradation. Catalyzes the phosphorolysis of single-stranded polyribonucleotides processively in the 3'- to 5'-direction. The sequence is that of Polyribonucleotide nucleotidyltransferase from Aliivibrio salmonicida (strain LFI1238) (Vibrio salmonicida (strain LFI1238)).